The chain runs to 360 residues: G-protein coupled receptor 183 (360 aa).

Over 1-30 (MDIKMDNFTTPSAASLESDCDLYAHHHTAR) the chain is Extracellular. Asn-7 carries an N-linked (GlcNAc...) asparagine glycan. Residues 31–56 (ILMPLHYSIVFIIGLVGNLLALIVII) form a helical membrane-spanning segment. Topologically, residues 57–76 (QNRKKINSTTLYSTNLVISD) are cytoplasmic. Residues 77-94 (ILFTTALPTRIAYYALGF) traverse the membrane as a helical segment. 7alpha,25-dihydroxycholesterol is bound at residue Arg-86. At 95–104 (DWRIGDALCR) the chain is on the extracellular side. A disulfide bridge links Cys-103 with Cys-180. The chain crosses the membrane as a helical span at residues 105–126 (ITALVFYINTYAGVNFMTCLSI). 7alpha,25-dihydroxycholesterol contacts are provided by Tyr-111 and Tyr-115. An interaction with G proteins region spans residues 125–133 (SIDRFFAVV). Residues 127–148 (DRFFAVVHPLRYNKIKRIEHAK) lie on the Cytoplasmic side of the membrane. A helical transmembrane segment spans residues 149–167 (CICIFVWILVFGQTLPLLI). Over 168–191 (NPMSKQEAERTTCMEYPNFEETKS) the chain is Extracellular. A helical membrane pass occupies residues 192-214 (LPWILLGACFIGYVLPLVIILIC). Over 215 to 240 (YSQICCKLFKTAKQNPLTEKSGVNKK) the chain is Cytoplasmic. Residues 241–264 (ALNTIIFIIVVFVVCFTPYHVAII) form a helical membrane-spanning segment. Tyr-259 lines the 7alpha,25-dihydroxycholesterol pocket. The Extracellular segment spans residues 265 to 286 (QHMIKKLRLPGLLECSQRHSFQ). Residues 287–311 (ISLHFTVCLMNFNCCMDPFIYFFAC) form a helical membrane-spanning segment. Residues 312–360 (KGYKRKVMKMLKRQVSVSISSAVRSAPEENSREMTETQMMIHSKSLNGK) are Cytoplasmic-facing. Phosphoserine is present on Ser-327. The segment at 339 to 360 (EENSREMTETQMMIHSKSLNGK) is disordered. Residues 347 to 360 (ETQMMIHSKSLNGK) are compositionally biased toward polar residues.

It belongs to the G-protein coupled receptor 1 family. In terms of assembly, homodimer and heterodimer. Heterodimerizes with CXCR5; leading to modulate the interaction between of CXCL13 and CXCR5.

The protein resides in the cell membrane. In terms of biological role, G-protein coupled receptor expressed in lymphocytes that acts as a chemotactic receptor for B-cells, T-cells, splenic dendritic cells, monocytes/macrophages and astrocytes. Receptor for oxysterol 7-alpha,25-dihydroxycholesterol (7-alpha,25-OHC) and other related oxysterols. Mediates cell positioning and movement of a number of cells by binding the 7-alpha,25-OHC ligand that forms a chemotactic gradient. Binding of 7-alpha,25-OHC mediates the correct localization of B-cells during humoral immune responses. Guides B-cell movement along the B-cell zone-T-cell zone boundary and later to interfollicular and outer follicular regions. Its specific expression during B-cell maturation helps position B-cells appropriately for mounting T-dependent antibody responses. Collaborates with CXCR5 to mediate B-cell migration; probably by forming a heterodimer with CXCR5 that affects the interaction between of CXCL13 and CXCR5. Also acts as a chemotactic receptor for some T-cells upon binding to 7-alpha,25-OHC ligand. Promotes follicular helper T (Tfh) cells differentiation by positioning activated T-cells at the follicle-T-zone interface, promoting contact of newly activated CD4 T-cells with activated dendritic cells and exposing them to Tfh-cell-promoting inducible costimulator (ICOS) ligand. Expression in splenic dendritic cells is required for their homeostasis, localization and ability to induce B- and T-cell responses: GPR183 acts as a chemotactic receptor in dendritic cells that mediates the accumulation of CD4(+) dendritic cells in bridging channels. Regulates migration of astrocytes and is involved in communication between astrocytes and macrophages. Promotes osteoclast precursor migration to bone surfaces. Signals constitutively through G(i)-alpha, but not G(s)-alpha or G(q)-alpha. Signals constitutively also via MAPK1/3 (ERK1/2). The sequence is that of G-protein coupled receptor 183 (GPR183) from Bos taurus (Bovine).